The following is a 451-amino-acid chain: Trigger factor (451 aa).

Positions 165-250 (DDKLTIDFEG…LHQIQAREML (86 aa)) constitute a PPIase FKBP-type domain.

It belongs to the FKBP-type PPIase family. Tig subfamily.

The protein localises to the cytoplasm. The enzyme catalyses [protein]-peptidylproline (omega=180) = [protein]-peptidylproline (omega=0). Involved in protein export. Acts as a chaperone by maintaining the newly synthesized protein in an open conformation. Functions as a peptidyl-prolyl cis-trans isomerase. The protein is Trigger factor (tig) of Helicobacter pylori (strain ATCC 700392 / 26695) (Campylobacter pylori).